Here is an 81-residue protein sequence, read N- to C-terminus: Small ribosomal subunit protein bS16 (81 aa).

The protein belongs to the bacterial ribosomal protein bS16 family.

The chain is Small ribosomal subunit protein bS16 from Colwellia psychrerythraea (strain 34H / ATCC BAA-681) (Vibrio psychroerythus).